The following is a 21-amino-acid chain: GLFGVLAKVAAHVVPAIAEHF.

At Phe-21 the chain carries Phenylalanine amide.

Expressed by the skin dorsal glands.

It localises to the secreted. Functionally, maculatin-1.1 shows significant antibacterial activity against Gram-positive bacteria, less against Gram-negative bacteria. Maculatin-1.1.1 is inactive. In Ranoidea genimaculata (Brown-spotted tree frog), this protein is Maculatin-1.1.